A 237-amino-acid polypeptide reads, in one-letter code: Putative ATP-binding protein BMEII0108 (237 aa).

Positions 5-205 (ISFNNVVMRY…DLPYPRTEAI (201 aa)) constitute an ABC transporter domain. 37–44 (GPSGCGKS) provides a ligand contact to ATP.

The protein belongs to the ABC transporter superfamily. In terms of assembly, the complex is composed of two ATP-binding proteins (BMEII0108), two transmembrane proteins (BMEII0107) and a solute-binding protein (BMEII0109).

It localises to the cell inner membrane. Its function is as follows. Probably part of an ABC transporter complex. Probably Responsible for energy coupling to the transport system. This chain is Putative ATP-binding protein BMEII0108, found in Brucella melitensis biotype 1 (strain ATCC 23456 / CCUG 17765 / NCTC 10094 / 16M).